We begin with the raw amino-acid sequence, 144 residues long: Acidic phospholipase A2 S15-109 (144 aa).

A signal peptide spans 1 to 19 (MYPAHLLVLLAVCVSLLGA). The propeptide occupies 20–27 (SDIPPQPL). 7 disulfide bridges follow: Cys-38-Cys-98, Cys-54-Cys-143, Cys-56-Cys-72, Cys-71-Cys-126, Cys-78-Cys-119, Cys-87-Cys-112, and Cys-105-Cys-117. Ca(2+) contacts are provided by Tyr-55, Gly-57, and Gly-59. Residue His-75 is part of the active site. Ca(2+) is bound at residue Asp-76. Residue Asp-120 is part of the active site.

This sequence belongs to the phospholipase A2 family. Group I subfamily. D49 sub-subfamily. It depends on Ca(2+) as a cofactor. In terms of tissue distribution, expressed by the venom gland.

The protein localises to the secreted. It catalyses the reaction a 1,2-diacyl-sn-glycero-3-phosphocholine + H2O = a 1-acyl-sn-glycero-3-phosphocholine + a fatty acid + H(+). In terms of biological role, snake venom phospholipase A2 (PLA2) that inhibits collagen-induced platelet aggregation. PLA2 catalyzes the calcium-dependent hydrolysis of the 2-acyl groups in 3-sn-phosphoglycerides. In Austrelaps superbus (Lowland copperhead snake), this protein is Acidic phospholipase A2 S15-109.